The sequence spans 130 residues: Small ribosomal subunit protein uS8 (130 aa).

It belongs to the universal ribosomal protein uS8 family. Part of the 30S ribosomal subunit. Contacts proteins S5 and S12.

Functionally, one of the primary rRNA binding proteins, it binds directly to 16S rRNA central domain where it helps coordinate assembly of the platform of the 30S subunit. The chain is Small ribosomal subunit protein uS8 from Salmonella arizonae (strain ATCC BAA-731 / CDC346-86 / RSK2980).